The sequence spans 138 residues: Holo-[acyl-carrier-protein] synthase (138 aa).

Positions 8 and 56 each coordinate Mg(2+).

Belongs to the P-Pant transferase superfamily. AcpS family. Mg(2+) is required as a cofactor.

Its subcellular location is the cytoplasm. It catalyses the reaction apo-[ACP] + CoA = holo-[ACP] + adenosine 3',5'-bisphosphate + H(+). Its function is as follows. Transfers the 4'-phosphopantetheine moiety from coenzyme A to a Ser of acyl-carrier-protein. The polypeptide is Holo-[acyl-carrier-protein] synthase (Thermoanaerobacter pseudethanolicus (strain ATCC 33223 / 39E) (Clostridium thermohydrosulfuricum)).